The chain runs to 205 residues: GTP cyclohydrolase-2 (205 aa).

49-53 (RIHSE) contacts GTP. The Zn(2+) site is built by Cys54, Cys65, and Cys67. GTP-binding positions include Gln70, 92-94 (EGR), and Thr114. Asp126 (proton acceptor) is an active-site residue. Residue Arg128 is the Nucleophile of the active site. Residues Thr149 and Lys154 each coordinate GTP.

Belongs to the GTP cyclohydrolase II family. It depends on Zn(2+) as a cofactor.

It carries out the reaction GTP + 4 H2O = 2,5-diamino-6-hydroxy-4-(5-phosphoribosylamino)-pyrimidine + formate + 2 phosphate + 3 H(+). It functions in the pathway cofactor biosynthesis; riboflavin biosynthesis; 5-amino-6-(D-ribitylamino)uracil from GTP: step 1/4. Functionally, catalyzes the conversion of GTP to 2,5-diamino-6-ribosylamino-4(3H)-pyrimidinone 5'-phosphate (DARP), formate and pyrophosphate. This is GTP cyclohydrolase-2 from Shewanella piezotolerans (strain WP3 / JCM 13877).